The chain runs to 146 residues: SsrA-binding protein (146 aa).

Residues 127-139 (KRQTIKDRDNSRE) are compositionally biased toward basic and acidic residues. The tract at residues 127-146 (KRQTIKDRDNSREARKHIRV) is disordered.

It belongs to the SmpB family.

The protein localises to the cytoplasm. Its function is as follows. Required for rescue of stalled ribosomes mediated by trans-translation. Binds to transfer-messenger RNA (tmRNA), required for stable association of tmRNA with ribosomes. tmRNA and SmpB together mimic tRNA shape, replacing the anticodon stem-loop with SmpB. tmRNA is encoded by the ssrA gene; the 2 termini fold to resemble tRNA(Ala) and it encodes a 'tag peptide', a short internal open reading frame. During trans-translation Ala-aminoacylated tmRNA acts like a tRNA, entering the A-site of stalled ribosomes, displacing the stalled mRNA. The ribosome then switches to translate the ORF on the tmRNA; the nascent peptide is terminated with the 'tag peptide' encoded by the tmRNA and targeted for degradation. The ribosome is freed to recommence translation, which seems to be the essential function of trans-translation. In Malacoplasma penetrans (strain HF-2) (Mycoplasma penetrans), this protein is SsrA-binding protein.